We begin with the raw amino-acid sequence, 117 residues long: Probable non-functional immunoglobulin heavy variable 1-38-4 (117 aa).

The N-terminal stretch at 1-19 (MDWNWRILFLVVATTGAHS) is a signal peptide. The tract at residues 20 to 44 (QVQLVQSWAEVRKSGASVKVSCSFS) is framework-1. One can recognise an Ig-like domain in the interval 20 to 117 (QVQLVQSWAE…EDMAVYYYAR (98 aa)). Residues 45–52 (GFTITSYG) are complementarity-determining-1. The interval 53-69 (IHWVQQSPGQGLEWMGW) is framework-2. The tract at residues 70–77 (INPGNGSP) is complementarity-determining-2. Residue asparagine 74 is glycosylated (N-linked (GlcNAc...) asparagine). Positions 78-115 (SYAKKFQGRFTMTRDMSTTTAYTDLSSLTSEDMAVYYY) are framework-3. The tract at residues 116–117 (AR) is complementarity-determining-3.

Most probably, the immunoglobulin is not assembled due to incorrect folding of heavy chain. Immunoglobulins are composed of two identical heavy chains and two identical light chains; disulfide-linked.

It localises to the secreted. The protein resides in the cell membrane. Functionally, probable non-functional open reading frame (ORF) of V region of the variable domain of immunoglobulin heavy chains. Non-functional ORF generally cannot participate in the synthesis of a productive immunoglobulin chain due to altered V-(D)-J or switch recombination and/or splicing site (at mRNA level) and/or conserved amino acid change (protein level). Immunoglobulins, also known as antibodies, are membrane-bound or secreted glycoproteins produced by B lymphocytes. In the recognition phase of humoral immunity, the membrane-bound immunoglobulins serve as receptors which, upon binding of a specific antigen, trigger the clonal expansion and differentiation of B lymphocytes into immunoglobulins-secreting plasma cells. Secreted immunoglobulins mediate the effector phase of humoral immunity, which results in the elimination of bound antigens. The antigen binding site is formed by the variable domain of one heavy chain, together with that of its associated light chain. Thus, each immunoglobulin has two antigen binding sites with remarkable affinity for a particular antigen. The variable domains are assembled by a process called V-(D)-J rearrangement and can then be subjected to somatic hypermutations which, after exposure to antigen and selection, allow affinity maturation for a particular antigen. In Homo sapiens (Human), this protein is Probable non-functional immunoglobulin heavy variable 1-38-4.